The sequence spans 590 residues: Aspartate--tRNA(Asp/Asn) ligase (590 aa).

Glu-170 lines the L-aspartate pocket. An aspartate region spans residues 194–197 (QLFK). Residue Arg-216 participates in L-aspartate binding. Residues 216-218 (RDE) and Gln-225 each bind ATP. His-448 contacts L-aspartate. Glu-482 contacts ATP. Residue Arg-489 participates in L-aspartate binding. 534–537 (GWDR) is a binding site for ATP. The tract at residues 559-590 (GGVDPLTEAPAPITAQQRKESGIDAKPGKDGA) is disordered. A compositionally biased stretch (basic and acidic residues) spans 575 to 590 (QRKESGIDAKPGKDGA).

It belongs to the class-II aminoacyl-tRNA synthetase family. Type 1 subfamily. As to quaternary structure, homodimer.

The protein localises to the cytoplasm. The catalysed reaction is tRNA(Asx) + L-aspartate + ATP = L-aspartyl-tRNA(Asx) + AMP + diphosphate. Aspartyl-tRNA synthetase with relaxed tRNA specificity since it is able to aspartylate not only its cognate tRNA(Asp) but also tRNA(Asn). Reaction proceeds in two steps: L-aspartate is first activated by ATP to form Asp-AMP and then transferred to the acceptor end of tRNA(Asp/Asn). This chain is Aspartate--tRNA(Asp/Asn) ligase, found in Mycolicibacterium gilvum (strain PYR-GCK) (Mycobacterium gilvum (strain PYR-GCK)).